The sequence spans 203 residues: Urease accessory protein UreG (203 aa).

GTP is bound at residue 14-21 (GPVGSGKT).

Belongs to the SIMIBI class G3E GTPase family. UreG subfamily. In terms of assembly, homodimer. UreD, UreF and UreG form a complex that acts as a GTP-hydrolysis-dependent molecular chaperone, activating the urease apoprotein by helping to assemble the nickel containing metallocenter of UreC. The UreE protein probably delivers the nickel.

The protein localises to the cytoplasm. Functionally, facilitates the functional incorporation of the urease nickel metallocenter. This process requires GTP hydrolysis, probably effectuated by UreG. The chain is Urease accessory protein UreG from Sinorhizobium medicae (strain WSM419) (Ensifer medicae).